The sequence spans 304 residues: Aspartate carbamoyltransferase catalytic subunit (304 aa).

Arg53 and Thr54 together coordinate carbamoyl phosphate. Lys82 contributes to the L-aspartate binding site. Arg103, His131, and Gln134 together coordinate carbamoyl phosphate. Arg163 and Arg224 together coordinate L-aspartate. Leu263 and Pro264 together coordinate carbamoyl phosphate.

The protein belongs to the aspartate/ornithine carbamoyltransferase superfamily. ATCase family. As to quaternary structure, heterooligomer of catalytic and regulatory chains.

It carries out the reaction carbamoyl phosphate + L-aspartate = N-carbamoyl-L-aspartate + phosphate + H(+). It functions in the pathway pyrimidine metabolism; UMP biosynthesis via de novo pathway; (S)-dihydroorotate from bicarbonate: step 2/3. Functionally, catalyzes the condensation of carbamoyl phosphate and aspartate to form carbamoyl aspartate and inorganic phosphate, the committed step in the de novo pyrimidine nucleotide biosynthesis pathway. The protein is Aspartate carbamoyltransferase catalytic subunit of Haloquadratum walsbyi (strain DSM 16790 / HBSQ001).